A 611-amino-acid polypeptide reads, in one-letter code: Elongation factor 4 (611 aa).

Residues A12 to E193 enclose the tr-type G domain. GTP is bound by residues D24–T29 and N140–D143.

It belongs to the TRAFAC class translation factor GTPase superfamily. Classic translation factor GTPase family. LepA subfamily.

Its subcellular location is the cell membrane. The enzyme catalyses GTP + H2O = GDP + phosphate + H(+). Its function is as follows. Required for accurate and efficient protein synthesis under certain stress conditions. May act as a fidelity factor of the translation reaction, by catalyzing a one-codon backward translocation of tRNAs on improperly translocated ribosomes. Back-translocation proceeds from a post-translocation (POST) complex to a pre-translocation (PRE) complex, thus giving elongation factor G a second chance to translocate the tRNAs correctly. Binds to ribosomes in a GTP-dependent manner. The sequence is that of Elongation factor 4 from Cutibacterium acnes (strain DSM 16379 / KPA171202) (Propionibacterium acnes).